The primary structure comprises 901 residues: MKYSASTSTPKSAQPKEEELENSLPTNADYSKIDVSKLSEMMQRYVEVKQQYSHALLLFRVGDFFECFFQDAVTIAQELELVQTTKHAGKEIGRVPMTGVPHHAVEKYATFLVEKGYAVVVCDQVEDSAIAKKENRQVKREITRILTPGTLTDDGMLKARYNNYLAAVVIAKNYWGLAYTDISTGEFLTTQTEGLDQLTQELMRLQPSEVLFPTKAPDIGFMLRPGERSDHLPEYLPHSFCYSLRPQQPFSLGEAKERLLMKFQLASLEGLGCERLPLGVRAAGGLLEYLEETQKENQVPLQRLRSYTLADFLILDHQSRRNLEITQTVRDGSYQGSLLSVVDKTSTAMGGRALRRWLQQPLLSLKGIRARHDTIDELIQNNDLRQDIQRVLRQIYDLERLTGRTGAGTANARDLVFLADSLTKLPELSTFVSQGNSPYLKVLQKIPPILQELGKKIHSNLVESPSQKLKEGGLIRPGINERLDEMRKLAEEDQKWIASLETTERERTGIPNLKVGYNKAFGYYISISKSKANLAPDDYTRKQTLTNEERYITEELKEREVRILTAQDDLNELEYDIFVDLRNEVGEYAEEIRNVSRAVAALDILCGLADVAIYQNYVRPTMVDSRELKIIEGRHPVVEKYLPAGFFVPNTAILGSKNLEKNNSGITPYSAPDLIILTGPNASGKSCYLRQVGLIQLMAQIGSFVPASSAVLGVSDRIFTRVGAVDDLATGQSTFMVEMNETANILNHATEKSLVLLDEIGRGTATFDGISIAWSVAEYLATEILSRTIFATHYHELNELSSILDNVANYQVTVKELPDKIVFLHQVQPGGADKSYGIEAGRLAGLPDSVIARARQVMQQIENHSKIAIGLRKGINKKEEEEIITVEQLDIFSEEFGDSLL.

Positions 1-12 (MKYSASTSTPKS) are enriched in polar residues. A disordered region spans residues 1–25 (MKYSASTSTPKSAQPKEEELENSLP). 679 to 686 (GPNASGKS) serves as a coordination point for ATP.

It belongs to the DNA mismatch repair MutS family.

Its function is as follows. This protein is involved in the repair of mismatches in DNA. It is possible that it carries out the mismatch recognition step. This protein has a weak ATPase activity. This chain is DNA mismatch repair protein MutS, found in Trichodesmium erythraeum (strain IMS101).